The chain runs to 653 residues: Dystrotelin (653 aa).

Residues 223–279 (THPVRCSVCRTFPIIGLRYHCLKCLDFDICELCFLSGLHKNSHEKSHTVMEECVQMS) form a ZZ-type zinc finger. Residues cysteine 228, cysteine 231, cysteine 243, cysteine 246, cysteine 252, cysteine 255, histidine 265, and histidine 269 each contribute to the Zn(2+) site. Positions 384–411 (RDSLNTLLRERRLLRKQLHRYKQKLQGT) form a coiled coil.

As to expression, strongly expressed in the nervous and muscular tissues.

It localises to the cell membrane. The sequence is that of Dystrotelin (Dytn) from Mus musculus (Mouse).